The sequence spans 308 residues: Adipolin (308 aa).

The first 21 residues, 1 to 21 (MWAWGWAAAALLWLQTAGAGA), serve as a signal peptide directing secretion. A disordered region spans residues 36-119 (DSPNITTSNR…PPGSPGVGVT (84 aa)). Residue N39 is glycosylated (N-linked (GlcNAc...) asparagine). Over residues 82 to 93 (RKRCRGRDKKSR) the composition is skewed to basic residues. Positions 99-113 (PGPPGPPGPPGPPGS) are enriched in pro residues. The C1q domain occupies 153–308 (QRLVVEAFYC…SSFSGMLLGT (156 aa)).

This sequence belongs to the adipolin/erythroferrone family. Homomultimer; disulfide-linked. Adipolin fC1QTNF12: homotrimer; disulfide-linked. Adipolin gC1QTNF12: homodimer; disulfide-linked. May interact with ERFE. Post-translationally, processed into Adipolin fC1QTNF12 and Adipolin gC1QTNF12 by FURIN. Insulin enhances endogenous C1QTNF12 cleavage. In terms of tissue distribution, widely expressed, with high expression in subcutaneous and epididymal white adipose tissues and brown adipose tissue. Expressed in adipocytes (at protein level).

It is found in the secreted. Functionally, insulin-sensitizing adipocyte-secreted protein (adipokine) that regulates glucose metabolism in liver and adipose tissue. Promotes glucose uptake in adipocytes and suppresses de novo glucose production in hepatocytes via the PI3K-Akt signaling pathway. Administration lead to reduction of blood glucose. Able to attenuate inflammation in fat tissue. Its function is as follows. Acts by activating the Akt signaling in hepatocytes and adipocytes. Not able to increase insulin-stimulated glucose uptake in adipocytes. In terms of biological role, acts by activating the MAP kinase. Increases insulin-stimulated glucose uptake in adipocytes. The chain is Adipolin (C1qtnf12) from Mus musculus (Mouse).